The sequence spans 357 residues: Phosphoserine aminotransferase (357 aa).

Residue R41 coordinates L-glutamate. Residues 76–77 (GT), W102, T152, D171, and Q194 contribute to the pyridoxal 5'-phosphate site. K195 is subject to N6-(pyridoxal phosphate)lysine. 235-236 (NT) lines the pyridoxal 5'-phosphate pocket.

Belongs to the class-V pyridoxal-phosphate-dependent aminotransferase family. SerC subfamily. As to quaternary structure, homodimer. The cofactor is pyridoxal 5'-phosphate.

It localises to the cytoplasm. It carries out the reaction O-phospho-L-serine + 2-oxoglutarate = 3-phosphooxypyruvate + L-glutamate. The enzyme catalyses 4-(phosphooxy)-L-threonine + 2-oxoglutarate = (R)-3-hydroxy-2-oxo-4-phosphooxybutanoate + L-glutamate. It functions in the pathway amino-acid biosynthesis; L-serine biosynthesis; L-serine from 3-phospho-D-glycerate: step 2/3. Its function is as follows. Catalyzes the reversible conversion of 3-phosphohydroxypyruvate to phosphoserine and of 3-hydroxy-2-oxo-4-phosphonooxybutanoate to phosphohydroxythreonine. The chain is Phosphoserine aminotransferase from Limosilactobacillus fermentum (strain NBRC 3956 / LMG 18251) (Lactobacillus fermentum).